A 417-amino-acid chain; its full sequence is XO lethal protein 1 (417 aa).

The interval 373 to 417 (VSPGETSSEGISDEHHYEEYDEDDIMEEEEAPSARQDDTYDEDEE) is disordered. Residues 391–403 (EYDEDDIMEEEEA) are compositionally biased toward acidic residues.

Belongs to the GHMP kinase family. Xol-1 subfamily.

The protein localises to the nucleus. Functionally, sex-determining factor that is required for sexual differentiation and X chromosome dosage compensation to promote male development. High expression during gastrulation triggers male development, while low expression at that time triggers hermaphrodite development. Although related to GHMP kinase, its mode of action remains unclear. In Caenorhabditis elegans, this protein is XO lethal protein 1.